A 315-amino-acid polypeptide reads, in one-letter code: Calumenin (315 aa).

A signal peptide spans 1-19 (MDLRQFLMCLSLCTAFALS). Serine 44 is modified (phosphoserine). Tyrosine 47 bears the Phosphotyrosine mark. Threonine 65 carries the post-translational modification Phosphothreonine. 6 EF-hand domains span residues 68–103 (ESKERLGKIVSKIDGDKDGFVTVDELKDWIKFAQKR), 104–139 (WIYEDVERQWKGHDLNEDGLVSWEEYKNATYGYVLD), 151–186 (QMMVRDERRFKMADKDGDLIATKEEFTAFLHPEEYD), 188–223 (MKDIVVQETMEDIDKNADGFIDLEEYIGDMYSHDGN), 229–264 (WVKTEREQFVEFRDKNRDGKMDKEETKDWILPSDYD), and 265–300 (HAEAEARHLVYESDQNKDGKLTKEEIVDKYDLFVGS). At serine 69 the chain carries Phosphoserine; by FAM20C. Residues aspartate 81, aspartate 83, aspartate 85, glutamate 92, aspartate 117, asparagine 119, aspartate 121, and glutamate 128 each coordinate Ca(2+). N-linked (GlcNAc...) (complex) asparagine glycosylation is present at asparagine 131. Aspartate 164 provides a ligand contact to Ca(2+). At lysine 165 the chain carries N6-acetyllysine. The Ca(2+) site is built by aspartate 166, aspartate 168, glutamate 175, aspartate 201, asparagine 203, aspartate 205, glutamate 212, aspartate 242, asparagine 244, aspartate 246, lysine 248, and glutamate 253. Residue threonine 254 is modified to Phosphothreonine. Phosphoserine is present on residues serine 261 and serine 277. Ca(2+)-binding residues include aspartate 278, asparagine 280, aspartate 282, lysine 284, and glutamate 289. A Prevents secretion from ER motif is present at residues 312–315 (HDEF).

The protein belongs to the CREC family. Interacts with GGCX. In terms of tissue distribution, ubiquitously expressed. Expressed at high levels in heart, placenta and skeletal muscle, at lower levels in lung, kidney and pancreas and at very low levels in brain and liver.

It localises to the endoplasmic reticulum membrane. The protein resides in the golgi apparatus. The protein localises to the secreted. It is found in the melanosome. Its subcellular location is the sarcoplasmic reticulum lumen. Functionally, involved in regulation of vitamin K-dependent carboxylation of multiple N-terminal glutamate residues. Seems to inhibit gamma-carboxylase GGCX. Binds 7 calcium ions with a low affinity. The protein is Calumenin (CALU) of Homo sapiens (Human).